Consider the following 312-residue polypeptide: Elongation factor Ts (312 aa).

Residues 80–83 form an involved in Mg(2+) ion dislocation from EF-Tu region; that stretch reads TDFV.

Belongs to the EF-Ts family.

It is found in the cytoplasm. Its function is as follows. Associates with the EF-Tu.GDP complex and induces the exchange of GDP to GTP. It remains bound to the aminoacyl-tRNA.EF-Tu.GTP complex up to the GTP hydrolysis stage on the ribosome. The protein is Elongation factor Ts of Maricaulis maris (strain MCS10) (Caulobacter maris).